The following is a 994-amino-acid chain: Chloride channel protein 1 (994 aa).

Residues 1–118 (MERSQSQRHG…VLRRKLGEDW (118 aa)) lie on the Cytoplasmic side of the membrane. A helical transmembrane segment spans residues 119-150 (IFLVLLGLLMALVSWCMDYVSAKSLQAYKWTY). The Extracellular segment spans residues 151-158 (AQMKPSLP). A helical transmembrane segment spans residues 159 to 179 (LQYLAWVTFPLILILFSALFC). At 180-183 (QLIS) the chain is on the cytoplasmic side. The segment at residues 184 to 189 (PQAVGS) is an intramembrane region (note=Loop between two helices). Residues 188 to 192 (GSGIP) carry the Selectivity filter part_1 motif. Serine 189 contributes to the chloride binding site. Positions 190–195 (GIPEMK) form an intramembrane region, helical. Residues 196–208 (TILRGVVLKEYLT) are Cytoplasmic-facing. Positions 209–224 (LKAFVAKVVALTAGLG) form an intramembrane region, helical. The segment at residues 225 to 230 (SGIPVG) is an intramembrane region (note=Loop between two helices). A Selectivity filter part_2 motif is present at residues 230–234 (GKEGP). An intramembrane region (helical) is located at residues 231–246 (KEGPFVHIASICAAVL). Topologically, residues 247–268 (SKFMSMFSGVYEQPYYYTDILT) are cytoplasmic. 2 intramembrane regions (helical) span residues 269–280 (VGCAVGVGCCFG) and 281–290 (TPLGGVLFSI). Residues 291 to 301 (EVTSTYFAVRN) lie on the Cytoplasmic side of the membrane. A helical transmembrane segment spans residues 302–321 (YWRGFFAATFSAFVFRVLAV). The Extracellular segment spans residues 322 to 347 (WNKDAVTITALFRTNFRMDFPFDLKE). Residues 348-376 (LPAFAVIGICCGFLGAVFVYLHRQVMLGV) traverse the membrane as a helical segment. Over 377-390 (RKHKCLSQFLAKHR) the chain is Cytoplasmic. A helical membrane pass occupies residues 391-408 (LLYPGIVTFVIASLTFPP). The Extracellular portion of the chain corresponds to 409–414 (GMGQFM). Positions 415 to 418 (AGEL) form an intramembrane region, note=Loop between two helices. Residues 419–426 (MPREAIST) constitute an intramembrane region (helical). Over 427 to 457 (LFDNNTWVKHIGDPQSLGQSAVWLHPQVNVI) the chain is Extracellular. Positions 458–475 (IIILLFFVMKFWMSIVAT) form an intramembrane region, helical. The note=Loop between two helices intramembrane region spans 476 to 482 (TMPIPCG). A Selectivity filter part_3 motif is present at residues 482–486 (GGFMP). An intramembrane region (helical) is located at residues 483–498 (GFMPVFVLGAAFGRLV). Phenylalanine 484 contacts chloride. Topologically, residues 499–521 (GEIMAMLFPEGILFDDIIYKILP) are extracellular. The segment at residues 522 to 538 (GGYAVIGAAALTGAVSH) is an intramembrane region (helical). The note=Loop between two helices intramembrane region spans 539–540 (TV). An intramembrane region (helical) is located at residues 541 to 554 (STAVICFELTGQIA). Residues 555–557 (HIL) are Extracellular-facing. Positions 558 to 571 (PMMVAVILANMVAQ) form an intramembrane region, helical. An intramembrane region (note=Loop between two helices) is located at residues 572–575 (SLQP). An intramembrane region (helical) is located at residues 576–578 (SLY). Residue tyrosine 578 coordinates chloride. The Cytoplasmic segment spans residues 579 to 994 (DSIIQVKKLP…DEEDEDELIL (416 aa)). The CBS 1 domain maps to 609-668 (MVRDVKFVSASCTYGELRNLLQATTVKTLPLVDSKDSMILLGSVERSELQSLLQRHLCAE). Residues 710 to 770 (EDEDEDLSRK…PEASDSADQR (61 aa)) are disordered. The span at 725-739 (TPAPPPPSPPPPPSQ) shows a compositional bias: pro residues. The region spanning 827–882 (IDQSPFQLVEQTTLHKTHTLFSLLGLHLAYVTSMGKLRGVLALEELQKAIEGHTKS) is the CBS 2 domain. 2 disordered regions span residues 886 to 954 (LRPP…ARAE) and 971 to 994 (ELAD…ELIL). A Phosphoserine modification is found at serine 892. Residues 933–943 (PETPVPPPSPE) are compositionally biased toward pro residues. The span at 985-994 (DEEDEDELIL) shows a compositional bias: acidic residues.

It belongs to the chloride channel (TC 2.A.49) family. ClC-1/CLCN1 subfamily. In terms of assembly, homodimer. In terms of tissue distribution, predominantly expressed in skeletal muscles.

Its subcellular location is the cell membrane. It is found in the sarcolemma. It localises to the T-tubule. It carries out the reaction chloride(in) = chloride(out). The catalysed reaction is thiocyanate(in) = thiocyanate(out). It catalyses the reaction bromide(in) = bromide(out). The enzyme catalyses nitrate(in) = nitrate(out). It carries out the reaction iodide(out) = iodide(in). Its activity is regulated as follows. Modulated by membrane voltage with depolarization favouring channel opening and hyperpolarization favouring channel closure. Inhibited by acidic pH and ATP binding due to a shift of voltage dependence of common gating to more positive voltages. Inhibited by 9-anthracene-carboxylic. In terms of biological role, voltage-gated chloride channel involved in skeletal muscle excitability. Generates most of the plasma membrane chloride conductance in skeletal muscle fibers, stabilizes the resting membrane potential and contributes to the repolarization phase during action potential firing. Forms a homodimeric channel where each subunit has its own ion conduction pathway. Conducts double-barreled currents controlled by two types of gates, two fast glutamate gates that control each subunit independently and a slow common gate that opens and shuts off both subunits simultaneously. Has a significant open probability at muscle resting potential and is further activated upon membrane depolarization. Permeable to small monovalent anions with ion selectivity for chloride &gt; thiocyanate &gt; bromide &gt; nitrate &gt; iodide. The chain is Chloride channel protein 1 (Clcn1) from Mus musculus (Mouse).